A 404-amino-acid chain; its full sequence is Glucose-1-phosphate adenylyltransferase (404 aa).

Alpha-D-glucose 1-phosphate contacts are provided by residues tyrosine 99, glycine 164, 179 to 180, and serine 197; that span reads EK.

This sequence belongs to the bacterial/plant glucose-1-phosphate adenylyltransferase family. As to quaternary structure, homotetramer.

It catalyses the reaction alpha-D-glucose 1-phosphate + ATP + H(+) = ADP-alpha-D-glucose + diphosphate. Its pathway is glycan biosynthesis; glycogen biosynthesis. Functionally, involved in the biosynthesis of ADP-glucose, a building block required for the elongation reactions to produce glycogen. Catalyzes the reaction between ATP and alpha-D-glucose 1-phosphate (G1P) to produce pyrophosphate and ADP-Glc. This is Glucose-1-phosphate adenylyltransferase from Rhodococcus opacus (strain B4).